Consider the following 394-residue polypeptide: MVLSASEEIANSQPSGNGKTSLDIKQNEGNPQFNPRNLWPDIIKCPKNEWTFEYTDIIKRLGTDEEKIQLTKKRMEKCLMYFHKLRKEMKLFDHTYTAACILFYRYWYKYDLPPTIPQCIHLAQAILVTACKTMENNRPTDHYIKATCDFMMKDGPSPTGQKLNVEKLKWEVRDQLVSYEKKVLCQLGFDLDIDNPKELIEEIFSGYYRHVRDTDIDASLREIFPVILQEARNFIIQTGTQPISLLCDGYTLVALALIFAGVTFQKNKEPGFSFPHNFFRRRFPVIITSEIIASLFSHYQQLEKAFFDLKSNKNSALSITVDEIDKVIDEDRQLDPEPFNPYDYDIIKEGEVNEELLNYTERKIEELSNRIMSERSIKRPSEPPAEQATKKPRF.

Disordered stretches follow at residues 1–32 and 372–394; these read MVLS…GNPQ and MSER…KPRF. Residues 9–32 are compositionally biased toward polar residues; it reads IANSQPSGNGKTSLDIKQNEGNPQ. The span at 372–381 shows a compositional bias: basic and acidic residues; sequence MSERSIKRPS.

Belongs to the BUR kinase complex.

The protein localises to the nucleus. Component of the BUR kinase complex involved in transcription regulation. This complex phosphorylates the UBC2/RAD6 ubiquitin-conjugating enzyme (E2), leading to monoubiquitination of histone H2B and the silencing of telomeric-associated genes. Also required for histone H3 methylation. Necessary for the recovery from pheromone-induced growth arrest in the cell cycle G1 phase. The kinase activity of the complex requires the presence of BUR2. Overexpression of BUR2 interferes with mitotic chromosome segregation. The chain is Protein BUR2 (BUR2) from Kluyveromyces lactis (strain ATCC 8585 / CBS 2359 / DSM 70799 / NBRC 1267 / NRRL Y-1140 / WM37) (Yeast).